The primary structure comprises 60 residues: Cytotoxin 1 (60 aa).

Intrachain disulfides connect Cys-3–Cys-21, Cys-14–Cys-38, Cys-42–Cys-53, and Cys-54–Cys-59.

It belongs to the three-finger toxin family. Short-chain subfamily. Type IA cytotoxin sub-subfamily. As to quaternary structure, monomer in solution; Homodimer and oligomer in the presence of negatively charged lipids forming a pore with a size ranging between 20 and 30 Angstroms. In terms of tissue distribution, expressed by the venom gland.

It localises to the secreted. It is found in the target cell membrane. Produces complete blockade of auricular contraction, which is irreversible at high concentrations. Induces apoptosis in leukemic cells. Possesses anti-arthritic and anti-inflammatory potential. In Naja kaouthia (Monocled cobra), this protein is Cytotoxin 1.